Consider the following 98-residue polypeptide: Large ribosomal subunit protein uL23 (98 aa).

Belongs to the universal ribosomal protein uL23 family. In terms of assembly, part of the 50S ribosomal subunit. Contacts protein L29, and trigger factor when it is bound to the ribosome.

In terms of biological role, one of the early assembly proteins it binds 23S rRNA. One of the proteins that surrounds the polypeptide exit tunnel on the outside of the ribosome. Forms the main docking site for trigger factor binding to the ribosome. The chain is Large ribosomal subunit protein uL23 from Clostridium kluyveri (strain NBRC 12016).